We begin with the raw amino-acid sequence, 104 residues long: MSVQGIDGVLQQMQVKALQASDTPIARPSVEPGFASELKAAIDKISDTQQVARTQAEKFTLGVPGVALNDVMVDLQKSSISMQMGIQVRNKLVSAYQEVMNMSV.

This sequence belongs to the FliE family.

The protein localises to the bacterial flagellum basal body. In Pectobacterium atrosepticum (strain SCRI 1043 / ATCC BAA-672) (Erwinia carotovora subsp. atroseptica), this protein is Flagellar hook-basal body complex protein FliE.